Reading from the N-terminus, the 790-residue chain is Serine/threonine-protein kinase DCLK3 (790 aa).

The tract at residues 1–37 (MPAAPVLRPPPPPATPAPPAPSRPAPPIPGHRGPCDH) is disordered. The segment covering 7–29 (LRPPPPPATPAPPAPSRPAPPIP) has biased composition (pro residues). Positions 97 to 183 (RVVTVVKLGG…KEPLTLKSIQ (87 aa)) constitute a Doublecortin domain. The segment covering 201–218 (HSRVPSPRLRSRLPSKLL) has biased composition (low complexity). 2 disordered regions span residues 201–290 (HSRV…SGEK) and 315–506 (LQLG…KGII). Composition is skewed to basic and acidic residues over residues 332–345 (DLGR…EKLV), 352–400 (RPSE…ESQD), 425–434 (IDMRREDRHT), and 457–496 (TRGE…ERPS). The region spanning 514–771 (YDIGGVIGDG…AEQVLQHPWI (258 aa)) is the Protein kinase domain. ATP is bound by residues 520 to 528 (IGDGNFATV) and lysine 543. Aspartate 635 (proton acceptor) is an active-site residue.

This sequence belongs to the protein kinase superfamily. CAMK Ser/Thr protein kinase family. CaMK subfamily. Highly expressed in brain and to a lower extent in liver and kidney.

It localises to the cytoplasm. The protein localises to the nucleus. The enzyme catalyses L-seryl-[protein] + ATP = O-phospho-L-seryl-[protein] + ADP + H(+). The catalysed reaction is L-threonyl-[protein] + ATP = O-phospho-L-threonyl-[protein] + ADP + H(+). The sequence is that of Serine/threonine-protein kinase DCLK3 (Dclk3) from Mus musculus (Mouse).